The sequence spans 153 residues: Nucleoside diphosphate kinase (153 aa).

Residues Lys-13, Phe-61, Arg-89, Thr-95, Arg-106, and Asn-116 each coordinate ATP. At Thr-95 the chain carries Phosphothreonine. The active-site Pros-phosphohistidine intermediate is His-119.

The protein belongs to the NDK family. Homohexamer and homotetramer. Interacts with TOM40 preferentially in an unfolded, unphosphorylated form. Mg(2+) is required as a cofactor. In terms of processing, the N-terminus is blocked.

It is found in the cytoplasm. Its subcellular location is the mitochondrion intermembrane space. The enzyme catalyses a 2'-deoxyribonucleoside 5'-diphosphate + ATP = a 2'-deoxyribonucleoside 5'-triphosphate + ADP. The catalysed reaction is a ribonucleoside 5'-diphosphate + ATP = a ribonucleoside 5'-triphosphate + ADP. Functionally, major role in the synthesis of nucleoside triphosphates other than ATP. The ATP gamma phosphate is transferred to the NDP beta phosphate via a ping-pong mechanism, using a phosphorylated active-site intermediate. Required for repair of UV radiation- and etoposide-induced DNA damage. The sequence is that of Nucleoside diphosphate kinase (YNK1) from Saccharomyces cerevisiae (strain ATCC 204508 / S288c) (Baker's yeast).